We begin with the raw amino-acid sequence, 187 residues long: Transcriptional regulator VspR (187 aa).

Its function is as follows. Represses the transcription of several genes encoded within the Vibrio 7th pandemic island-1 (VSP-1), including dncV, VC_0176, VC_0178 and VC_0180. This chain is Transcriptional regulator VspR (vspR), found in Vibrio cholerae serotype O1 (strain ATCC 39315 / El Tor Inaba N16961).